Reading from the N-terminus, the 344-residue chain is Molybdate/tungstate import ATP-binding protein WtpC (344 aa).

The ABC transporter domain occupies 2–231; the sequence is LRVESVSKDY…PVDEGVARFL (230 aa). Residue 33–40 coordinates ATP; it reads GPSGAGKT. Residues 280 to 344 form the Mop domain; that stretch reads KTSARNEFRA…SFKTSAIKVF (65 aa).

It belongs to the ABC transporter superfamily. Sulfate/tungstate importer (TC 3.A.1.6) family. In terms of assembly, the complex is composed of two ATP-binding proteins (WtpC), two transmembrane proteins (WtpB) and a solute-binding protein (WtpA).

The protein resides in the cell membrane. The catalysed reaction is tungstate(in) + ATP + H2O = tungstate(out) + ADP + phosphate + H(+). In terms of biological role, part of the ABC transporter complex WtpABC involved in molybdate/tungstate import. Responsible for energy coupling to the transport system. In Pyrococcus abyssi (strain GE5 / Orsay), this protein is Molybdate/tungstate import ATP-binding protein WtpC (wtpC).